The primary structure comprises 357 residues: NADPH HC-toxin reductase 1 (357 aa).

NADP(+)-binding positions include arginine 40, lysine 47, 68–69 (DL), 88–90 (VAT), tyrosine 178, lysine 182, 207–210 (LGLV), and threonine 222. Lysine 182 serves as the catalytic Proton donor.

This sequence belongs to the NAD(P)-dependent epimerase/dehydratase family.

Its activity is regulated as follows. Activity is sensitive to heat, dependent on NADPH, and inhibited by p-hydroxymercuribenzoate and disulfiram. Functionally, in tandem with Hm2, NADPH-dependent Helminthosporium carbonum (HC) toxin reductase (HCTR), which inactivates HC toxin, a cyclic tetrapeptide produced by the fungus Cochliobolus carbonum to permit infection and acting as an inhibitor of host histone deacetylases (HDACs), thus conferring resistance against C.carbonum race 1 in resistant cultivars (e.g. cv. B73 and cv. Wisconsin 22). Catalyzes the production of 8-hydroxy derivative of HC-toxin via the reduction of the 8-keto group of 2-amino-9,10-epoxy-8-oxo-decanoic acid, an amino acid of the HC-toxin. This is NADPH HC-toxin reductase 1 from Zea mays (Maize).